Reading from the N-terminus, the 1191-residue chain is Protogenin (1191 aa).

The signal sequence occupies residues 1–23 (MAPPVRPGMLPLLLLLLLPPLGS). 4 Ig-like domains span residues 24–124 (VPGV…AHLT), 126–216 (STIS…ASLT), 229–316 (PTII…ATLT), and 321–405 (PSFV…ARLT). Topologically, residues 24-943 (VPGVWSFSEL…YYHLDQKSMT (920 aa)) are extracellular. Cystine bridges form between cysteine 54/cysteine 107 and cysteine 150/cysteine 199. Asparagine 237 is a glycosylation site (N-linked (GlcNAc...) asparagine). 2 disulfide bridges follow: cysteine 250–cysteine 298 and cysteine 342–cysteine 389. 5 Fibronectin type-III domains span residues 415 to 509 (APYN…TLED), 511 to 607 (PLRP…TPKA), 612 to 711 (APKS…VRDR), 718 to 811 (PPHH…TLPE), and 816 to 911 (PPVG…VLPK). An N-linked (GlcNAc...) asparagine glycan is attached at asparagine 624. A helical transmembrane segment spans residues 944 to 964 (GIAVGVGIALTCILICVLILI). At 965–1191 (YRSKARKSSA…LRYAAEGFPV (227 aa)) the chain is on the cytoplasmic side. Disordered regions lie at residues 975–1010 (SKTA…ETAE) and 1079–1191 (ISDE…GFPV). Residues 977–990 (TAQSGTQPLSQASA) show a composition bias toward polar residues. Positions 1104-1132 (DTEHSANSEGSHETGDSGRFSHESNDEIH) are enriched in basic and acidic residues. Polar residues-rich tracts occupy residues 1135 to 1146 (SVISSTPPTSNP) and 1171 to 1180 (EQTSAPQTSA).

The protein belongs to the immunoglobulin superfamily. DCC family. As to expression, from mid-gastrulation to early somite stages, restricted to posterior neural plate and mesoderm with an anterior limit at the level of the rhombencephalon. Posterior restriction is progressively lost during somitogenesis. Expression is maintained in the neural tube and paraxial mesoderm during this process. As development proceeds, further restricted to the dorsal parts of the spinal cord and somites. In parallel, expression progresses caudally during axis elongation.

The protein localises to the membrane. In terms of biological role, may play a role in anteroposterior axis elongation. This is Protogenin from Mus musculus (Mouse).